The following is a 341-amino-acid chain: Anthranilate phosphoribosyltransferase (341 aa).

5-phospho-alpha-D-ribose 1-diphosphate contacts are provided by residues glycine 84, 87–88 (GD), threonine 92, 94–97 (NIST), 112–120 (KHGNRSVSS), and serine 124. Glycine 84 contributes to the anthranilate binding site. Serine 96 contacts Mg(2+). Position 115 (asparagine 115) interacts with anthranilate. Arginine 170 is a binding site for anthranilate. Residues aspartate 229 and glutamate 230 each coordinate Mg(2+).

Belongs to the anthranilate phosphoribosyltransferase family. In terms of assembly, homodimer. Mg(2+) is required as a cofactor.

The enzyme catalyses N-(5-phospho-beta-D-ribosyl)anthranilate + diphosphate = 5-phospho-alpha-D-ribose 1-diphosphate + anthranilate. It functions in the pathway amino-acid biosynthesis; L-tryptophan biosynthesis; L-tryptophan from chorismate: step 2/5. Catalyzes the transfer of the phosphoribosyl group of 5-phosphorylribose-1-pyrophosphate (PRPP) to anthranilate to yield N-(5'-phosphoribosyl)-anthranilate (PRA). In Polynucleobacter asymbioticus (strain DSM 18221 / CIP 109841 / QLW-P1DMWA-1) (Polynucleobacter necessarius subsp. asymbioticus), this protein is Anthranilate phosphoribosyltransferase.